We begin with the raw amino-acid sequence, 136 residues long: Large ribosomal subunit protein uL16c (136 aa).

Residues Met1–Lys20 form a disordered region.

It belongs to the universal ribosomal protein uL16 family. As to quaternary structure, part of the 50S ribosomal subunit.

It is found in the plastid. The protein localises to the chloroplast. This is Large ribosomal subunit protein uL16c from Triticum aestivum (Wheat).